The following is an 819-amino-acid chain: Endonuclease MutS2 (819 aa).

Position 339–346 (Gly-339–Thr-346) interacts with ATP. Positions Val-744 to Ala-819 constitute a Smr domain.

This sequence belongs to the DNA mismatch repair MutS family. MutS2 subfamily. As to quaternary structure, homodimer. Binds to stalled ribosomes, contacting rRNA.

Endonuclease that is involved in the suppression of homologous recombination and thus may have a key role in the control of bacterial genetic diversity. In terms of biological role, acts as a ribosome collision sensor, splitting the ribosome into its 2 subunits. Detects stalled/collided 70S ribosomes which it binds and splits by an ATP-hydrolysis driven conformational change. Acts upstream of the ribosome quality control system (RQC), a ribosome-associated complex that mediates the extraction of incompletely synthesized nascent chains from stalled ribosomes and their subsequent degradation. Probably generates substrates for RQC. The protein is Endonuclease MutS2 of Gemmatimonas aurantiaca (strain DSM 14586 / JCM 11422 / NBRC 100505 / T-27).